A 386-amino-acid polypeptide reads, in one-letter code: Patatin-16 (386 aa).

An N-terminal signal peptide occupies residues 1–23; that stretch reads MATTKSFLILIVMILATTSSTFA. The region spanning 32 to 229 is the PNPLA domain; sequence LSIDGGGIKG…TVADPALLSV (198 aa). The GXGXXG motif lies at 36–41; sequence GGGIKG. Residues 75-79 carry the GXSXG motif; that stretch reads GTSTG. Catalysis depends on S77, which acts as the Nucleophile. N115 carries N-linked (GlcNAc...) asparagine glycosylation. Catalysis depends on D215, which acts as the Proton acceptor. The short motif at 215–217 is the DGA/G element; the sequence is DGA. The stretch at 360–384 forms a coiled coil; that stretch reads ETYEEALKRFAKLLSDRKKLRANKA.

Belongs to the patatin family.

Its subcellular location is the vacuole. Functionally, probable lipolytic acyl hydrolase (LAH), an activity which is thought to be involved in the response of tubers to pathogens. The sequence is that of Patatin-16 from Solanum tuberosum (Potato).